Here is an 838-residue protein sequence, read N- to C-terminus: Probable bifunctional folylpolyglutamate synthase/dihydropteroate synthase (838 aa).

A folylpolyglutamate synthase region spans residues 1–418; it reads MEYHEAVNFL…LVVGSLYVVA (418 aa). 46–52 serves as a coordination point for ATP; sequence GSNGKGS. The tract at residues 541–561 is disordered; it reads AADAGEDDERGAGDASDAGHD. One can recognise a Pterin-binding domain in the interval 569–819; that stretch reads TAVMGILNVT…DVPENVAAVN (251 aa). Residues 571 to 838 are DHPS; the sequence is VMGILNVTPN…RFEADAERED (268 aa). Asn576 serves as a coordination point for Mg(2+). Residues Thr616, Asp649, Asn668, Asp738, Lys774, and 807 to 809 contribute to the (7,8-dihydropterin-6-yl)methyl diphosphate site; that span reads RVH.

It in the N-terminal section; belongs to the folylpolyglutamate synthase family. The protein in the C-terminal section; belongs to the DHPS family. It depends on Mg(2+) as a cofactor.

It carries out the reaction (6S)-5,6,7,8-tetrahydrofolyl-(gamma-L-Glu)(n) + L-glutamate + ATP = (6S)-5,6,7,8-tetrahydrofolyl-(gamma-L-Glu)(n+1) + ADP + phosphate + H(+). The enzyme catalyses (7,8-dihydropterin-6-yl)methyl diphosphate + 4-aminobenzoate = 7,8-dihydropteroate + diphosphate. It functions in the pathway cofactor biosynthesis; tetrahydrofolylpolyglutamate biosynthesis. It participates in cofactor biosynthesis; tetrahydrofolate biosynthesis; 7,8-dihydrofolate from 2-amino-4-hydroxy-6-hydroxymethyl-7,8-dihydropteridine diphosphate and 4-aminobenzoate: step 1/2. Functionally, can complement an H.volcanii mutant strain that is thymidine auxotroph because it lacks the two dihydrofolate reductase genes encoded by hdrA and hdrB. This chain is Probable bifunctional folylpolyglutamate synthase/dihydropteroate synthase (folCP), found in Haloferax volcanii (strain ATCC 29605 / DSM 3757 / JCM 8879 / NBRC 14742 / NCIMB 2012 / VKM B-1768 / DS2) (Halobacterium volcanii).